The sequence spans 142 residues: Serine/threonine-protein kinase BtrW (142 aa).

This sequence belongs to the anti-sigma-factor family. As to quaternary structure, probably able to multimerize; interacts with BtrV.

It carries out the reaction L-seryl-[protein] + ATP = O-phospho-L-seryl-[protein] + ADP + H(+). The catalysed reaction is L-threonyl-[protein] + ATP = O-phospho-L-threonyl-[protein] + ADP + H(+). Functionally, possible negative regulator of sigma-B activity. Phosphorylates and inactivates its specific antagonist protein, BtrV. Upon phosphorylation of BtrV, BtrW is released and binds to an unknown partner(s) that might be sigma-B, thereby blocking its ability to form a complex with its partner (possibly an RNA polymerase holoenzyme (E-sigma-B)). Involved in type III secretion system (T3SS). Phosphorylates BtrV. In Bordetella bronchiseptica (strain ATCC BAA-588 / NCTC 13252 / RB50) (Alcaligenes bronchisepticus), this protein is Serine/threonine-protein kinase BtrW (btrW).